A 2947-amino-acid polypeptide reads, in one-letter code: 3'-5' exoribonuclease HELZ2 (2947 aa).

Residues P85–E114 form a C3H1-type 1 zinc finger. Residues C167–H187 form a C2H2-type zinc finger. A C3H1-type 2 zinc finger spans residues Y221–V245. The C2H2-type; atypical zinc-finger motif lies at C289 to H311. Residues V769–T1317 enclose the UvrD-like helicase ATP-binding domain. G790 to T797 lines the ATP pocket. The interaction with THRAP3 stretch occupies residues Q809–S1290. Positions D913 to A916 match the DEAA box motif. The disordered stretch occupies residues E1260–F1292. 4 consecutive short sequence motifs (LXXLL motif) follow at residues L1306–L1310, L1348–L1352, L1403–L1407, and L2240–P2244. R2381 is modified (omega-N-methylarginine). The segment at P2413–S2947 is interaction with THRAP3. Residues L2449 to H2726 enclose the UvrD-like helicase ATP-binding 2 domain. Position 2470–2477 (G2470–T2477) interacts with ATP. The short motif at L2525 to L2529 is the LXXLL motif 5 element.

It belongs to the DNA2/NAM7 helicase family. In terms of assembly, interacts with PPARA (via DNA-binding domain) and PPARG; the interaction stimulates the transcriptional activity of PPARA and PPARG. Interacts with THRAP3; the interaction is direct and HELZ2 and THRAP3 synergistically enhance the transcriptional activity of PPARG. It is probably part of the peroxisome proliferator activated receptor alpha interacting complex (PRIC).

The protein localises to the cytoplasm. The enzyme catalyses Exonucleolytic cleavage in the 3'- to 5'-direction to yield nucleoside 5'-phosphates.. The catalysed reaction is ATP + H2O = ADP + phosphate + H(+). Its function is as follows. Can degrade highly structured RNAs through its concerted ATP-dependent RNA helicase and 3' to 5' exoribonuclease activities. Shows a strong preference for pyrimidine over purine residues for its nuclease activity. Acts as a transcriptional coactivator for a number of nuclear receptors including PPARA, PPARG, THRA, THRB and RXRA. This Mus musculus (Mouse) protein is 3'-5' exoribonuclease HELZ2 (Helz2).